The chain runs to 64 residues: MPKMKSNKSVAARFKLTGSGQLKRTRPGKRHKLSKKSSQEKRNLSKQPLVDKGQVGMYKRMMLV.

Residues 1-56 (MPKMKSNKSVAARFKLTGSGQLKRTRPGKRHKLSKKSSQEKRNLSKQPLVDKGQVG) form a disordered region. Residues 23-35 (KRTRPGKRHKLSK) are compositionally biased toward basic residues.

The protein belongs to the bacterial ribosomal protein bL35 family.

This is Large ribosomal subunit protein bL35 from Chlamydia abortus (strain DSM 27085 / S26/3) (Chlamydophila abortus).